The primary structure comprises 450 residues: 3-phosphoshikimate 1-carboxyvinyltransferase (450 aa).

The 3-phosphoshikimate site is built by Lys28, Ser29, and Arg33. Lys28 contacts phosphoenolpyruvate. 2 residues coordinate phosphoenolpyruvate: Gly100 and Arg128. 3-phosphoshikimate contacts are provided by Ser173, Gln175, Asp326, and Lys353. Gln175 contacts phosphoenolpyruvate. The Proton acceptor role is filled by Asp326. 2 residues coordinate phosphoenolpyruvate: Arg357 and Arg402.

The protein belongs to the EPSP synthase family. As to quaternary structure, monomer.

The protein resides in the cytoplasm. It catalyses the reaction 3-phosphoshikimate + phosphoenolpyruvate = 5-O-(1-carboxyvinyl)-3-phosphoshikimate + phosphate. The protein operates within metabolic intermediate biosynthesis; chorismate biosynthesis; chorismate from D-erythrose 4-phosphate and phosphoenolpyruvate: step 6/7. Its function is as follows. Catalyzes the transfer of the enolpyruvyl moiety of phosphoenolpyruvate (PEP) to the 5-hydroxyl of shikimate-3-phosphate (S3P) to produce enolpyruvyl shikimate-3-phosphate and inorganic phosphate. The polypeptide is 3-phosphoshikimate 1-carboxyvinyltransferase (Brucella abortus (strain S19)).